The sequence spans 588 residues: Autophagy-related protein 22-1 (588 aa).

Residues Tyr-35–Leu-55 traverse the membrane as a helical segment. An N-linked (GlcNAc...) asparagine glycan is attached at Asn-84. 3 consecutive transmembrane segments (helical) span residues Thr-109–Ile-129, Leu-144–Pro-164, and Leu-168–Leu-188. A glycan (N-linked (GlcNAc...) asparagine) is linked at Asn-255. Transmembrane regions (helical) follow at residues Gly-270–Val-290, Leu-301–Leu-321, Ile-365–Thr-385, Ala-399–Trp-419, Ile-434–Pro-454, Phe-471–Gly-493, Leu-507–Thr-527, and Ala-536–Ala-556.

Belongs to the ATG22 family.

It localises to the vacuole membrane. In terms of biological role, vacuolar effluxer which mediate the efflux of amino acids resulting from autophagic degradation. The release of autophagic amino acids allows the maintenance of protein synthesis and viability during nitrogen starvation. The chain is Autophagy-related protein 22-1 (atg22-1) from Emericella nidulans (strain FGSC A4 / ATCC 38163 / CBS 112.46 / NRRL 194 / M139) (Aspergillus nidulans).